Here is a 134-residue protein sequence, read N- to C-terminus: MARVKRGVTAHAKHKKVLKAAKGFYGRRKNTIRTAKAAVDRSKQYAYRDRKVNKRNFRALWIQRINAAVREFGLTYGRFIDGLNKAGIEVDRKVLSDMAIHEPEAFGALVNAAKKALEYLKEAGTANEFEGAVK.

The protein belongs to the bacterial ribosomal protein bL20 family.

Functionally, binds directly to 23S ribosomal RNA and is necessary for the in vitro assembly process of the 50S ribosomal subunit. It is not involved in the protein synthesizing functions of that subunit. The protein is Large ribosomal subunit protein bL20 of Rhizobium leguminosarum bv. trifolii (strain WSM2304).